A 219-amino-acid polypeptide reads, in one-letter code: Glucagon-2 (219 aa).

A signal peptide spans 1–20 (MKSTCYMIGILLLILQNTYQ). 5 propeptides span residues 21–50 (SPVPEADGSSRSVKAARNEAVDDSEQLKEV), 84–95 (SGGLSRRNADYE), 136–140 (NAEIE), 175–178 (IRYS), and 213–219 (KDLLEEH). Residues 23 to 43 (VPEADGSSRSVKAARNEAVDD) are disordered.

It belongs to the glucagon family.

It localises to the secreted. Its function is as follows. Promotes hydrolysis of glycogen and lipids, and raises the blood sugar level. This chain is Glucagon-2 (gcg2), found in Xenopus laevis (African clawed frog).